Reading from the N-terminus, the 257-residue chain is UPF0246 protein Sbal223_3241 (257 aa).

Belongs to the UPF0246 family.

This chain is UPF0246 protein Sbal223_3241, found in Shewanella baltica (strain OS223).